Here is a 470-residue protein sequence, read N- to C-terminus: MQNLFRLLPPVDAVLTALGDDVGLAALPRAMLRDAVTAYLDGLRDDIRAGRLTEPAQLDHGLVFAQCARQVAAATRPHFRRVINATGVVVHTNLGRSLLAPEAAAAAADACLRYSNLEFDLATGERGSRYSHVVDILRTLTGAEDALVVNNNAAAVMIVLETLAKGREVIVSRGQLVEIGGSFRIPEVMAKSGAVLREVGATNRTHLRDYENAVSPETAALLKVHTSNYRIVGFTKEVSLAELAELGARLGLPVIEDLGSGNLTDFAACGLPGEPTVQQAVAEGADVVTFSGDKVLGGPQAGIIVGKAKYIAAIRKNPLNRAMRIDKMTLAALEATLRLYRDPERARAVIPTLAMITASPEALAKKARKLAGLLRKALAGRYAVSAIPGASRVGGGAYPERDLPTTLVALRPLTGAPSPDALRQRLLAADPPLVARTQDDALLLDPRTLADDELKLVATVLAQACQPETA.

Residue Lys294 is modified to N6-(pyridoxal phosphate)lysine.

Belongs to the SelA family. It depends on pyridoxal 5'-phosphate as a cofactor.

The protein localises to the cytoplasm. It catalyses the reaction L-seryl-tRNA(Sec) + selenophosphate + H(+) = L-selenocysteinyl-tRNA(Sec) + phosphate. It participates in aminoacyl-tRNA biosynthesis; selenocysteinyl-tRNA(Sec) biosynthesis; selenocysteinyl-tRNA(Sec) from L-seryl-tRNA(Sec) (bacterial route): step 1/1. Its function is as follows. Converts seryl-tRNA(Sec) to selenocysteinyl-tRNA(Sec) required for selenoprotein biosynthesis. The polypeptide is L-seryl-tRNA(Sec) selenium transferase (Solidesulfovibrio magneticus (strain ATCC 700980 / DSM 13731 / RS-1) (Desulfovibrio magneticus)).